The primary structure comprises 249 residues: MIPEVSNEASQPAAHRQENVDPNEIAKFDAVAARWWDLEGEFKPLHHINPLRLDYILERSGGLFGKNVLDVGCGGGILAESMAREGAKVTGLDMGAEPLAVARLHALESGVMLAYHQQTVEEHAEAHPGAYDVVTCMEMLEHVPDPASIVRACARLVKPGGEVFFSTLNRNPKAWLMAIVGAEYVLRMVPRGTHDITKFIKPAELLGWVDDTPLREQHIIGLHYNPLRDRFYLGGNVDVNYMLHTRRQA.

Residues 1 to 21 (MIPEVSNEASQPAAHRQENVD) form a disordered region. Residues arginine 52, glycine 72, aspartate 93, and methionine 137 each contribute to the S-adenosyl-L-methionine site.

It belongs to the methyltransferase superfamily. UbiG/COQ3 family.

The enzyme catalyses a 3-demethylubiquinol + S-adenosyl-L-methionine = a ubiquinol + S-adenosyl-L-homocysteine + H(+). It catalyses the reaction a 3-(all-trans-polyprenyl)benzene-1,2-diol + S-adenosyl-L-methionine = a 2-methoxy-6-(all-trans-polyprenyl)phenol + S-adenosyl-L-homocysteine + H(+). The protein operates within cofactor biosynthesis; ubiquinone biosynthesis. In terms of biological role, O-methyltransferase that catalyzes the 2 O-methylation steps in the ubiquinone biosynthetic pathway. This Sodalis glossinidius (strain morsitans) protein is Ubiquinone biosynthesis O-methyltransferase.